The chain runs to 175 residues: Co-chaperone protein HscB homolog (175 aa).

In terms of domain architecture, J spans 2-76 (NYFALFNLTP…RAEHMLELRG (75 aa)).

Belongs to the HscB family. Interacts with HscA and stimulates its ATPase activity.

In terms of biological role, co-chaperone involved in the maturation of iron-sulfur cluster-containing proteins. Seems to help targeting proteins to be folded toward HscA. The sequence is that of Co-chaperone protein HscB homolog from Pseudoalteromonas atlantica (strain T6c / ATCC BAA-1087).